We begin with the raw amino-acid sequence, 247 residues long: Cell division protein ZapD (247 aa).

This sequence belongs to the ZapD family. In terms of assembly, interacts with FtsZ.

It is found in the cytoplasm. Functionally, cell division factor that enhances FtsZ-ring assembly. Directly interacts with FtsZ and promotes bundling of FtsZ protofilaments, with a reduction in FtsZ GTPase activity. The polypeptide is Cell division protein ZapD (Shigella sonnei (strain Ss046)).